The primary structure comprises 141 residues: Nucleoside diphosphate kinase (141 aa).

Positions 11, 59, 87, 93, 104, and 114 each coordinate ATP. Catalysis depends on His-117, which acts as the Pros-phosphohistidine intermediate.

The protein belongs to the NDK family. As to quaternary structure, homotetramer. Requires Mg(2+) as cofactor.

The protein resides in the cytoplasm. It catalyses the reaction a 2'-deoxyribonucleoside 5'-diphosphate + ATP = a 2'-deoxyribonucleoside 5'-triphosphate + ADP. The enzyme catalyses a ribonucleoside 5'-diphosphate + ATP = a ribonucleoside 5'-triphosphate + ADP. In terms of biological role, major role in the synthesis of nucleoside triphosphates other than ATP. The ATP gamma phosphate is transferred to the NDP beta phosphate via a ping-pong mechanism, using a phosphorylated active-site intermediate. The chain is Nucleoside diphosphate kinase from Photorhabdus laumondii subsp. laumondii (strain DSM 15139 / CIP 105565 / TT01) (Photorhabdus luminescens subsp. laumondii).